The chain runs to 84 residues: Replication regulatory protein repA2 (84 aa).

Over residues 1 to 13 (MSQTENAVTSSSG) the composition is skewed to polar residues. A disordered region spans residues 1–31 (MSQTENAVTSSSGAKRAYRKGNPLSDAEKQR).

Functionally, this protein is involved in the determination of copy number in gene replication. It binds to the repA promoter thus inhibiting the synthesis of the mRNA for the initiator protein repA. This chain is Replication regulatory protein repA2 (repA2), found in Escherichia coli O157:H7.